The chain runs to 393 residues: Cytochrome b (393 aa).

4 helical membrane-spanning segments follow: residues 32-52 (FGSLLAFCLVIQIITGVTLAM), 76-98 (WLIRYLHANTASAFFFIVYLHMG), 113-133 (VWTLGVIIFILMIVTAFLGYV), and 179-199 (FFALHFVLPFVLAALALMHLI). Residues His82 and His96 each contribute to the heme b site. His183 and His197 together coordinate heme b. A ubiquinone is bound at residue His202. A run of 4 helical transmembrane segments spans residues 226–246 (FIFKDLITIFLFILGLSIFVF), 290–310 (LLGVIAMFAAIVILLVMPFTD), 322–342 (LSKIAYYFFIANFLILMKLGA), and 349–369 (FIEFGQISTVLYFSHFVIIVP).

The protein belongs to the cytochrome b family. In terms of assembly, fungal cytochrome b-c1 complex contains 10 subunits; 3 respiratory subunits, 2 core proteins and 5 low-molecular weight proteins. Cytochrome b-c1 complex is a homodimer. The cofactor is heme b.

The protein localises to the mitochondrion inner membrane. Component of the ubiquinol-cytochrome c reductase complex (complex III or cytochrome b-c1 complex) that is part of the mitochondrial respiratory chain. The b-c1 complex mediates electron transfer from ubiquinol to cytochrome c. Contributes to the generation of a proton gradient across the mitochondrial membrane that is then used for ATP synthesis. This is Cytochrome b (COB) from Venturia inaequalis (Apple scab fungus).